The sequence spans 305 residues: Acetyl-coenzyme A carboxylase carboxyl transferase subunit beta (305 aa).

Positions 29-298 (LWTKCESCDA…EMKLPLLESS (270 aa)) constitute a CoA carboxyltransferase N-terminal domain. C33, C36, C52, and C55 together coordinate Zn(2+). A C4-type zinc finger spans residues 33–55 (CESCDALTYTKDLQANLMVCLQC).

Belongs to the AccD/PCCB family. As to quaternary structure, acetyl-CoA carboxylase is a heterohexamer composed of biotin carboxyl carrier protein (AccB), biotin carboxylase (AccC) and two subunits each of ACCase subunit alpha (AccA) and ACCase subunit beta (AccD). Requires Zn(2+) as cofactor.

It is found in the cytoplasm. It catalyses the reaction N(6)-carboxybiotinyl-L-lysyl-[protein] + acetyl-CoA = N(6)-biotinyl-L-lysyl-[protein] + malonyl-CoA. It functions in the pathway lipid metabolism; malonyl-CoA biosynthesis; malonyl-CoA from acetyl-CoA: step 1/1. Its function is as follows. Component of the acetyl coenzyme A carboxylase (ACC) complex. Biotin carboxylase (BC) catalyzes the carboxylation of biotin on its carrier protein (BCCP) and then the CO(2) group is transferred by the transcarboxylase to acetyl-CoA to form malonyl-CoA. The polypeptide is Acetyl-coenzyme A carboxylase carboxyl transferase subunit beta (Synechococcus sp. (strain ATCC 27144 / PCC 6301 / SAUG 1402/1) (Anacystis nidulans)).